Reading from the N-terminus, the 489-residue chain is Mitogen-activated protein kinase adapter protein MST50 (489 aa).

A disordered region spans residues 1-56 (MSFNTGTAYAESDADDEYERDIHDSSPIDATDAEASPTESDPPSNEHTPTTYGYRS). Polar residues predominate over residues 37–54 (PTESDPPSNEHTPTTYGY). Residues 69 to 132 (WTADECADFI…LRSVYDVKKA (64 aa)) form the SAM domain. Disordered stretches follow at residues 207 to 285 (PLPH…AAER) and 309 to 379 (SINI…GSNA). Composition is skewed to polar residues over residues 256 to 265 (PKATSPTHLQ) and 328 to 346 (ASRS…STFA). The region spanning 377 to 457 (SNASVEIFKS…PMFMLRKTNN (81 aa)) is the Ras-associating domain.

As to quaternary structure, interacts with MST7 and MST11. Interacts with MCK1, MKK2 and HIK1.

Functionally, mitogen-activated protein kinase adapter protein; part of the MST11-MST7-PMK1 MAP kinase (MAPK) cascade that is essential for appressorium formation, penetration and invasive growth. Binds to the MAPKKK MST11 and the MAPKK MST7 to maintain the stability of the MST11-MST7 complex for the phosphorylation of the MAPK PMK1. Is also involved in the MPS1 and OSM1 MAPK pathways, and especially plays a role in the activation of MPS1 in response to cell wall stress. Its function differs in the 3 MAPK pathways. This Pyricularia oryzae (strain 70-15 / ATCC MYA-4617 / FGSC 8958) (Rice blast fungus) protein is Mitogen-activated protein kinase adapter protein MST50.